The sequence spans 579 residues: MAENESNVVVDHGQSRLSDLWTKEDYWAIWLGFVILIAGMWLFLANPSPEFAQKVDKANAVMAAEAERAPFKTLAYYKAQDDKGKLKAMDSATGKSIGAFLKAPGGWTSNPLESFVLSKEAAEERNAAAKSKFEAAKAKSDAAFAAAQVAEAAAAEAGFADTALNDAAQGKIAEWRADLAKMKSAEKKVKTKAFNISTSLPMLMVVMGLFFAIGMKFMGHDVPKFLVGFIGVFVVAVIAQMMGHQSTMKYWGIGTEAWAIIIGMLIANTVGTPNFIKPALQVEYYIKTGLVLLGAEVLFDKIIAIGIPGIFVAWVVTPIVLICTFIFGQKILKMPSKTLNMVISADMSVCGTSAAIATAAACRAKKEELTLSIGLSLVFTAIMMIVMPAFIKSVGMPQILGGAWMGGTIDATGAVAAAGAFLGEKALYVAATIKMIQNVLIGVVAFGVAVYWCARVECTSGRSVGWIEIWNRFPKFVLGFLTASIIFSIISGSLGSDMSQIMVNQGVLKGLSSPLRGWFFCLAFTAIGLATNFRELAHYFKGGKPLILYVCGQSFNLVLTLTMAYIMFYIVFPEITAKI.

Transmembrane regions (helical) follow at residues 26 to 45 (YWAI…LFLA), 193 to 215 (AFNI…AIGM), 225 to 243 (FLVG…QMMG), 250 to 272 (YWGI…TVGT), 305 to 327 (IGIP…TFIF), 369 to 391 (LTLS…PAFI), 430 to 452 (AATI…AVYW), 473 to 495 (FPKF…GSLG), 515 to 533 (LRGW…ATNF), and 546 to 568 (LILY…YIMF).

Belongs to the UPF0324 family.

It localises to the cell membrane. This chain is UPF0324 membrane protein DVU_0943, found in Nitratidesulfovibrio vulgaris (strain ATCC 29579 / DSM 644 / CCUG 34227 / NCIMB 8303 / VKM B-1760 / Hildenborough) (Desulfovibrio vulgaris).